A 747-amino-acid chain; its full sequence is MTDSWERGKGRRTQPPWSAPNTQAQPGLRLYNSLTRSKELFVPQDGNKVTWYCCGPTVYDASHMGHARSYISFDILRRVLRDYFKYDVFYCMNITDIDDKIIKRARQRHLFQQYRERNPRPSDLLQDVSAALTPFLQRISEANDPDKRQMLERIHGSVSAALLPLQDAVSSNARAEELERLSQELMEAAVDLLSDWLDEKHGAQITDNSIFSQLPKHWESEYHRDMEALNVLPPDVLTRVSEYVPEIVAFVQRIVDNGYGYVSNGSVYFSTAKFHASEKHYYAKLVPEAVGDQKALQEGEGDLSISADRLSEKQSPNDFALWKASKPGEPSWESPWGKGRPGWHIECSAMAGSILGESMDIHGGGFDLRFPHHDNELAQSEAYFDNDHWVRYFLHTGHLTIAGCKMSKSLKNFITIKDALQKNTARQLRLAFLMHAWKDTLDYSSNTMESAVQYEKFMNEFFLNVKDLLRAPTDVTGQFVKWEVPELELNSCFYSKKAAVHEALCDNIDTRTVMEEMRSLVSQCNSYIASRKAAKQPPNRLLLRSVSSYLTAMLKVFGAIEGEEVIGFPIGGSDNSMNLESTVMPYLQVLSQFREGVRQIARQHKVTEVLQLSDLLRDDVLPELGVRLEDHEGLPTVVKLVDRETLLKEKEEKRKAEEEKQRKKEEAARKKQQQEAAKLEKMKVSPSQMFQLETDKYSQFDESGFPTHDTEGKELSKGQSKKLRKLYEAQEKLHKEYLQMAQNGTTG.

The segment at 1-25 (MTDSWERGKGRRTQPPWSAPNTQAQ) is disordered. Residues 15–25 (PPWSAPNTQAQ) are compositionally biased toward polar residues. A Zn(2+)-binding site is contributed by C54. Residue G55 coordinates L-cysteine. Residues 56–66 (PTVYDASHMGH) carry the 'HIGH' region motif. T95 is a binding site for L-cysteine. The 'KIIK' region motif lies at 100 to 103 (KIIK). Positions 347, 372, and 376 each coordinate Zn(2+). L-cysteine is bound at residue H372. The short motif at 405 to 409 (KMSKS) is the 'KMSKS' region element. ATP is bound at residue K408. The segment covering 651–683 (EEKRKAEEEKQRKKEEAARKKQQQEAAKLEKMK) has biased composition (basic and acidic residues). The segment at 651–722 (EEKRKAEEEK…KELSKGQSKK (72 aa)) is disordered.

It belongs to the class-I aminoacyl-tRNA synthetase family. In terms of assembly, homodimer. Zn(2+) serves as cofactor.

The protein localises to the cytoplasm. It carries out the reaction tRNA(Cys) + L-cysteine + ATP = L-cysteinyl-tRNA(Cys) + AMP + diphosphate. Functionally, catalyzes the ATP-dependent ligation of cysteine to tRNA(Cys). The chain is Cysteine--tRNA ligase, cytoplasmic (cars1) from Xenopus tropicalis (Western clawed frog).